Reading from the N-terminus, the 395-residue chain is Flavohemoprotein (395 aa).

A Globin domain is found at Met-1 to Ser-136. His-85 lines the heme b pocket. Residues Tyr-95 and Glu-135 each act as charge relay system in the active site. Residues Gly-147–Ile-395 are reductase. In terms of domain architecture, FAD-binding FR-type spans His-150 to Glu-255. FAD is bound by residues Tyr-188 and Arg-204 to Ser-207. Gly-268–Pro-273 contacts NADP(+). An FAD-binding site is contributed by Cys-388–Pro-391.

Belongs to the globin family. Two-domain flavohemoproteins subfamily. It in the C-terminal section; belongs to the flavoprotein pyridine nucleotide cytochrome reductase family. Heme b serves as cofactor. The cofactor is FAD.

Its subcellular location is the cytoplasm. It catalyses the reaction 2 nitric oxide + NADPH + 2 O2 = 2 nitrate + NADP(+) + H(+). It carries out the reaction 2 nitric oxide + NADH + 2 O2 = 2 nitrate + NAD(+) + H(+). Its function is as follows. Is involved in NO detoxification in an aerobic process, termed nitric oxide dioxygenase (NOD) reaction that utilizes O(2) and NAD(P)H to convert NO to nitrate, which protects the bacterium from various noxious nitrogen compounds. Therefore, plays a central role in the inducible response to nitrosative stress. This chain is Flavohemoprotein (hmp), found in Dickeya dadantii (strain 3937) (Erwinia chrysanthemi (strain 3937)).